The chain runs to 520 residues: Ribonuclease Y (520 aa).

Residues 1–21 (MDIITIIIAVIAGIGGGFGIS) form a helical membrane-spanning segment. Positions 210–276 (CVSVFNIESD…RLALHKLVTD (67 aa)) constitute a KH domain. One can recognise an HD domain in the interval 336-429 (LLQHSREVSK…VQVCDAISGA (94 aa)).

Belongs to the RNase Y family.

Its subcellular location is the cell membrane. In terms of biological role, endoribonuclease that initiates mRNA decay. The polypeptide is Ribonuclease Y (Flavobacterium psychrophilum (strain ATCC 49511 / DSM 21280 / CIP 103535 / JIP02/86)).